Here is a 156-residue protein sequence, read N- to C-terminus: Protein-export protein SecB (156 aa).

Belongs to the SecB family. As to quaternary structure, homotetramer, a dimer of dimers. One homotetramer interacts with 1 SecA dimer.

It localises to the cytoplasm. In terms of biological role, one of the proteins required for the normal export of preproteins out of the cell cytoplasm. It is a molecular chaperone that binds to a subset of precursor proteins, maintaining them in a translocation-competent state. It also specifically binds to its receptor SecA. This chain is Protein-export protein SecB, found in Desulfotalea psychrophila (strain LSv54 / DSM 12343).